We begin with the raw amino-acid sequence, 367 residues long: Peptide chain release factor 2 (367 aa).

Glutamine 254 bears the N5-methylglutamine mark.

It belongs to the prokaryotic/mitochondrial release factor family. In terms of processing, methylated by PrmC. Methylation increases the termination efficiency of RF2.

It localises to the cytoplasm. Its function is as follows. Peptide chain release factor 2 directs the termination of translation in response to the peptide chain termination codons UGA and UAA. The sequence is that of Peptide chain release factor 2 from Variovorax paradoxus (strain S110).